Here is a 276-residue protein sequence, read N- to C-terminus: Large ribosomal subunit protein uL2c (276 aa).

The interval 225-256 (NPVDHPHGGGEGRSPIGRPKPVSPWGKTALGA) is disordered.

It belongs to the universal ribosomal protein uL2 family. In terms of assembly, part of the 50S ribosomal subunit.

The protein resides in the plastid. It is found in the chloroplast. The sequence is that of Large ribosomal subunit protein uL2c (rpl2) from Mesostigma viride (Green alga).